Consider the following 209-residue polypeptide: Yop proteins translocation protein K (209 aa).

Its function is as follows. Belongs to an operon involved in the translocation of Yop proteins across the bacterial membranes or in the specific control of this function. The sequence is that of Yop proteins translocation protein K (yscK) from Yersinia pseudotuberculosis serotype I (strain IP32953).